Reading from the N-terminus, the 343-residue chain is Dihydroorotase (343 aa).

Zn(2+) contacts are provided by histidine 13 and histidine 15. Substrate contacts are provided by residues 15-17 (HFR) and asparagine 41. Zn(2+) contacts are provided by lysine 98, histidine 135, and histidine 173. N6-carboxylysine is present on lysine 98. Histidine 135 contributes to the substrate binding site. Leucine 218 contacts substrate. Zn(2+) is bound at residue aspartate 246. Aspartate 246 is a catalytic residue. Substrate contacts are provided by histidine 250 and alanine 262.

Belongs to the metallo-dependent hydrolases superfamily. DHOase family. Class II DHOase subfamily. Homodimer. The cofactor is Zn(2+).

The enzyme catalyses (S)-dihydroorotate + H2O = N-carbamoyl-L-aspartate + H(+). It functions in the pathway pyrimidine metabolism; UMP biosynthesis via de novo pathway; (S)-dihydroorotate from bicarbonate: step 3/3. Catalyzes the reversible cyclization of carbamoyl aspartate to dihydroorotate. This is Dihydroorotase from Marinomonas sp. (strain MWYL1).